The sequence spans 414 residues: UPF0754 membrane protein tlr2287 (414 aa).

A run of 2 helical transmembrane segments spans residues 2–22 and 386–406; these read ADIS…IGYF and AIVR…AGVL.

It belongs to the UPF0754 family.

Its subcellular location is the cell inner membrane. This Thermosynechococcus vestitus (strain NIES-2133 / IAM M-273 / BP-1) protein is UPF0754 membrane protein tlr2287.